The sequence spans 426 residues: 4-aminobutyrate aminotransferase GabT (426 aa).

Pyridoxal 5'-phosphate-binding positions include 111 to 112 (GS) and glutamine 242. Lysine 268 bears the N6-(pyridoxal phosphate)lysine mark. Residue threonine 297 coordinates pyridoxal 5'-phosphate.

It belongs to the class-III pyridoxal-phosphate-dependent aminotransferase family. In terms of assembly, homotetramer. Pyridoxal 5'-phosphate is required as a cofactor.

It carries out the reaction 4-aminobutanoate + 2-oxoglutarate = succinate semialdehyde + L-glutamate. It catalyses the reaction 5-aminopentanoate + 2-oxoglutarate = 5-oxopentanoate + L-glutamate. It participates in amino-acid degradation; 4-aminobutanoate degradation. Its pathway is amino-acid degradation. Functionally, pyridoxal phosphate-dependent enzyme that catalyzes transamination between primary amines and alpha-keto acids. Catalyzes the transfer of the amino group from gamma-aminobutyrate (GABA) to alpha-ketoglutarate (KG) to yield succinic semialdehyde (SSA) and glutamate. Thereby functions in a GABA degradation pathway that allows some E.coli strains to utilize GABA as a nitrogen source for growth. Also catalyzes the conversion of 5-aminovalerate to glutarate semialdehyde, as part of a L-lysine degradation pathway that proceeds via cadaverine, glutarate and L-2-hydroxyglutarate. In Escherichia coli (strain K12), this protein is 4-aminobutyrate aminotransferase GabT (gabT).